The following is a 152-amino-acid chain: Protein Smg homolog (152 aa).

The protein belongs to the Smg family.

This chain is Protein Smg homolog, found in Nitrosomonas eutropha (strain DSM 101675 / C91 / Nm57).